The sequence spans 848 residues: ATP-dependent RNA helicase dbp10 (848 aa).

Positions 22–43 (DIATDNQKDKHENVGENVSDED) are disordered. Residues 69–97 (SNFQSMGLNQTLLRAIFKKGFKAPTPIQR) carry the Q motif motif. The 173-residue stretch at 100 to 272 (IPLLLEGRDV…KAGLQDPVLV (173 aa)) folds into the Helicase ATP-binding domain. 113 to 120 (ARTGSGKT) lines the ATP pocket. A DEAD box motif is present at residues 220–223 (DEAD). In terms of domain architecture, Helicase C-terminal spans 330 to 480 (RKRALELALK…TSSKQVKTDS (151 aa)). A disordered region spans residues 610–650 (NKVKPKGIKSEVASDKITDSSPGNMSEASESELEEVFKNPK). The segment covering 617–627 (IKSEVASDKIT) has biased composition (basic and acidic residues). Polar residues predominate over residues 628–637 (DSSPGNMSEA). Phosphoserine is present on residues serine 638, serine 733, and serine 736. Residues 768-813 (ANDSPIRENKRYKHNKLQTPKPADKFRDNYHKQNKRNREAKERGIG) are disordered. Over residues 789–812 (PADKFRDNYHKQNKRNREAKERGI) the composition is skewed to basic and acidic residues.

The protein belongs to the DEAD box helicase family. DDX54/DBP10 subfamily.

The protein resides in the nucleus. It localises to the nucleolus. It carries out the reaction ATP + H2O = ADP + phosphate + H(+). Its function is as follows. ATP-binding RNA helicase involved in the biogenesis of 60S ribosomal subunits and is required for the normal formation of 25S and 5.8S rRNAs. The polypeptide is ATP-dependent RNA helicase dbp10 (dbp10) (Schizosaccharomyces pombe (strain 972 / ATCC 24843) (Fission yeast)).